The primary structure comprises 447 residues: Tol-Pal system protein TolB (447 aa).

Positions 1 to 29 are cleaved as a signal peptide; that stretch reads MITMSRIRSLAAFAVFVILGVAAVLPAQA.

This sequence belongs to the TolB family. The Tol-Pal system is composed of five core proteins: the inner membrane proteins TolA, TolQ and TolR, the periplasmic protein TolB and the outer membrane protein Pal. They form a network linking the inner and outer membranes and the peptidoglycan layer.

It is found in the periplasm. In terms of biological role, part of the Tol-Pal system, which plays a role in outer membrane invagination during cell division and is important for maintaining outer membrane integrity. In Paramagnetospirillum magneticum (strain ATCC 700264 / AMB-1) (Magnetospirillum magneticum), this protein is Tol-Pal system protein TolB.